The following is a 572-amino-acid chain: Galectin-3-binding protein B (572 aa).

Residues 1-14 (MLLLWPLLFLQVSA) form the signal peptide. Residues 32-131 (VRLVGVIPSS…HKEDAGVICA (100 aa)) enclose the SRCR domain. Disulfide bonds link Cys-56/Cys-120, Cys-69/Cys-130, and Cys-100/Cys-110. 3 N-linked (GlcNAc...) asparagine glycosylation sites follow: Asn-135, Asn-195, and Asn-202. One can recognise a BTB domain in the interval 164-231 (CDFTIAVRDL…LYTRQIDVST (68 aa)). One can recognise a BACK domain in the interval 270 to 372 (QVSMYEYGVR…IPVDKLYDIQ (103 aa)). 2 N-linked (GlcNAc...) asparagine glycosylation sites follow: Asn-430 and Asn-548.

The protein localises to the secreted. Its subcellular location is the extracellular space. It is found in the extracellular matrix. In terms of biological role, promotes integrin-mediated cell adhesion. In Danio rerio (Zebrafish), this protein is Galectin-3-binding protein B (lgals3bpb).